Reading from the N-terminus, the 366-residue chain is Leucine dehydrogenase (366 aa).

The active site involves lysine 82. 182–188 (GVGNVAY) is a binding site for NAD(+).

The protein belongs to the Glu/Leu/Phe/Val dehydrogenases family.

It catalyses the reaction L-leucine + NAD(+) + H2O = 4-methyl-2-oxopentanoate + NH4(+) + NADH + H(+). The protein operates within amino-acid degradation; L-leucine degradation; 4-methyl-2-oxopentanoate from L-leucine (dehydrogenase route): step 1/1. Its function is as follows. Catalyzes the reversible deamination of L-leucine to 4-methyl-2-oxopentanoate. The chain is Leucine dehydrogenase (ldh) from Bacillus cereus.